The following is a 48-amino-acid chain: Large ribosomal subunit protein bL33A (48 aa).

The protein belongs to the bacterial ribosomal protein bL33 family.

This Limosilactobacillus fermentum (strain NBRC 3956 / LMG 18251) (Lactobacillus fermentum) protein is Large ribosomal subunit protein bL33A.